Consider the following 107-residue polypeptide: MSGSQLWAAVVVLLLLQSAQGVYIKYHGFQVQLESVKKLSELEEKQMSSPQLRKSGLLLPDVCHNPALPLDLQPICASQEAASTFKALRTIATDECELCINVACTGC.

The signal sequence occupies residues 1 to 21 (MSGSQLWAAVVVLLLLQSAQG). Positions 22–92 (VYIKYHGFQV…STFKALRTIA (71 aa)) are excised as a propeptide. 3 disulfides stabilise this stretch: C63–C76, C96–C104, and C99–C107.

This sequence belongs to the guanylin family.

The protein resides in the secreted. Functionally, endogenous activator of intestinal guanylate cyclase. It stimulates this enzyme through the same receptor binding region as the heat-stable enterotoxins. May be a potent physiological regulator of intestinal fluid and electrolyte transport. May be an autocrine/paracrine regulator of intestinal salt and water transport. This Notomys alexis (Spinifex hopping mouse) protein is Guanylate cyclase activator 2B (GUCA2B).